A 91-amino-acid polypeptide reads, in one-letter code: Putative membrane protein insertion efficiency factor (91 aa).

Positions 72–91 (SGGNDPVPEKLTHINHQHEK) are disordered. Residues 78 to 91 (VPEKLTHINHQHEK) are compositionally biased toward basic and acidic residues.

The protein belongs to the UPF0161 family.

The protein localises to the cell inner membrane. Its function is as follows. Could be involved in insertion of integral membrane proteins into the membrane. The chain is Putative membrane protein insertion efficiency factor from Pseudoalteromonas translucida (strain TAC 125).